Consider the following 3373-residue polypeptide: MVFEGLVSDVLSRVLGEYVKNLNKDQLKIGIFGGSVQLQNLELKEDALANLPINLPITVKKGFLGKLDLKVPWKDLKSKPVIINIDCIYALAVPQTQNYKYDEKEEAKKQAELKKKKLENYEWIKSIKDAEENEISSLQSEKSDSFTDRLVTKIIDNLQIVINKVHIRFENKNDIGKLYALGITLDKLSIQSTDEFWIPSFVDSSKSKFIKKLALMDSLGFYIDDNADSLQNLKLDEFTKAFTSLIPSSASFSLLSKYIIKPISSQLKLNINKSDIIEKSIPKILVECVMSQITCTLSSGQYQNILSILNFTNEYLRDIKYLKFRPIVKVSENPKLWWRYVGQVIVEQIREKRFSRSWEFIAQRRRARLAYIPLFKRNIPKVDWLQPLNKHELEQLNQLEERLSFEDIVYFRSLAYAEIKKETEKNKIRKQFLDSKRQERGFFQNIFNTKKDEDEKAAPKIQLSSEERDELYKTIEYNDVVSASEEPPDWVKIIGNFEIKGFAIQLVEANQVFIEALYTGLSLKFEQRNEGIKVMAGIHLFEVYDQFTKRTHFPKIIASVPTKGTGTFASVIVDTRPPDKNLDLSVELNMDPLNIIVTKPLIMKVVDFFHDPNLDITNISNRAGAHLEDIKEQAKMQLQDAIDNHKVLGLAVNIHAPVIFIPEDVINERSNILIVDLGKLVVRSDTSAFVKGSNKLAGSTSEIDLYDKFNVSFESIQVLLSDDLKSAISTGDKKPPTIGGVNDKQGHPLKHHNSIIKKFDIQLKIFSSIQQNNLTMTKLKIKGELPKFDFYLSDKKFKQLLTILNAITADIPVTSGKPKATITPINDSNSPSSVSPKLISTSPHSFSSSSAPVDVNSSNDLKKSKENIELLLNAKLVEAEFEIKSISLTLSNNQSDLIRVVFSDINVGFQQRTFDMSGTFKLSSLEIEDCFTKNTLNKLATSNPPHADRSLGKDSLVQMHFKQIQTASPEFNKIDMSIDLKIHSFYLVINPSTIYQLLKLAKSLQKDPENIDQISKAYPRLLSRNKVVPINSSEGGGTAATSPNAHLSSPNQQSPNQQSPNQQSPQIVSRKIITGTGSNSKPVGPDEKVVSSKTASGTTTRRVIIRSVRHVPKKKGPTEFVSMKFSVHINSLGLALNQDNNELLGIFTINNVSTDVSMFKDNRMLVQGRLGSIILDDLTPTISNYKQIIIPKNTSGDMLDFKYETFSMTLSNYAGYDASVNANVKSILFNANVGFLIHLQNYFLGGMLDPILKQDDSNNNNKSIEKSKSIDSKLNEQQSSSSSTSTPRSDDNHEKSERELDLEKNKKLLTSLQQNTNKHIPKMKLDIVVETPVLVIPQATRSKNSLIMELGKIIISNGWQYHDKTMAPMENMKIHLQDANITILSDNRSSYFLEKLTIDLGISKFLVPNTDPEVEDQTIDLSISHFAFYLDENQYRFFLGLSQNVQKELDLANKEVQEIKKLSNMGDPFEMGRITSNDMQYFTEQEVIQKMGKVLLRIHLVLDYVSFKISSLDAQGEIAHFIVRGIDVDVKNTDKNKTNIQLSMKSILLSDTRSNSTNIFKNLLENKVNTESVAPFLQVGYIRDNLLGDQYINVNINNTCLFLSPTPLLMISEFFMVPLSEQHDTNNMDVDLDLDLESLESELNSLMDPSIEKDDNDLQQQQQQSSSSSFIPSQQQQQQKVRSQSIIGQNRSRTSSIGGKESKTISSSISNNSLSSYPQEAGMEDEEEKEIFRSPTITFTATLVPSVTLVEDETLSTTRCLMLKTRVGVQFRRDPHGIENATVVIENTKVNIYKPSSTESENQGSRPIQILKPIEMITIKYIKENLTSTEWKQDIGISCTAMKVFFSYDDVKAILKILNNITTNLQKQQEQQKKRQLSFDNMASSSTSLPSLNKSTNSFQTSTSGNSNSGKKDEELFTNNEKLRFSCPNVSVLFINESPEMYIPIIELFFADIEASAMNWSTDLESKASMSIKGDYFNETNMKFEPVIEDWSFSVDLKKNRTGKIKGSFLATRELLNINVSHSLLQTISSAMIHVEKIDQMDAANLSSSLNASNLTTSTGSNNSSTSGSGLVQSFNGPSVLNKYLPGGEKNDSKISFHSHWISNQTGVTLEYHIPKVDSEMFQLTESSEPVSLPMKISKSRDATMGEHLNIELFIQGSKISNLSMDAVGYRIYRIGSTNEFITCEVRLRPDGSKCCYIKSMDQFENNTSLNLELKCQENGSPFSIAKHSKFSLPILVSKDLCKFWIKLENSPYWSDPIDIYKLPDHENSKLFKLQTVDKVGMFVSLVHKTIANRNCDRFNNTFKFFPPIQIENILPYPFKLSIPGTTIDKVNMGSGEKIDCHYYQPGSNLVAIVSELENFPETKHTLVSGDATSPTFTKTFKLQQNNREISLDIERTELIKGVRTLSFYCQYWLVNNSLLPIEVKLSDNQVLLVPPNLPDQLPRPPVLYSNNTIRARIPLQAEQPMNKSFCEKFPISAVGNPNTIFLTNPTRTYELSYKVDFCPNERFRLSKTVTFVPKNVICNDLPFPILVAQCVSTIDGIDKMALNFSGSGLSSSSGSNGKGVSNPVRLLGELRLDPGEYKPFHWEENVENKKISIRPITNEKNPQEWRWSGGFFVDSISDYVVKSRNTERPDHDSLLFHVNIKEKQGTHFIRIPLSSKESPPYIIQNDTQFKISFFQRDSPENIDYIEPKEKLCYGWDEPSAEYVLSVAVEGKTLKKRINVNKIKGYKLQHERTDLYITITIDGPSRVLLFSTNEKKFRSIKAWTDNKAVNLSQSQSEYHFNIRCSGIGCSIIDKTPKELAYISMKDFLIIATQSSIENTVEVKLAELQIDNQLIKTDFPVLIHTVSPDKEHRKDFLHAVIIKSTIDNIDYFRYFSTLIQEMTIELEDHWIKEVLDFVDSIPSFGRGNNASNNNNNNGMTSSQMRQSGSGLDSLTSTLYNAVSIEPPTSDSSTIKMVYFALLVLNPIKINLTLALQNDGLIKSNHKILSLVEGLGLSLTRLDRAPITLQGLLMEHPFTSRSTIIDKIKTSYIQQALRQFYNILGSVDFLGNPVGLFRNFGTGVHDFFVEPAQGLVKSPADFTKGLAKGTSSFVKNSVFGTFNTLSKLTGTLGTGVATLSFDEKYLQERKLHQARKPSHVGEGLAMGGIGLGRGILQGITGIVTKPVEGAKKGGFAGFAKGLAQGVVGVAVKPTTAVIDLATKTTEGIKNTTNLQSQAERVRPPRCFSHDNVLRPFDEVESEGWFLLKTAHKGKHASDSYIWHHIINQECTIIISDHRIILSKSKKNFLHSSFLFQIPFKFIKSNEMVDDGVLLEFDPPQNLGLLDRDVKSKVIPVDDPNVNMLLNMKLSHALKKFHDNNPNLSNSSSIKY.

The 117-residue stretch at 3–119 (FEGLVSDVLS…QAELKKKKLE (117 aa)) folds into the Chorein N-terminal domain. 5 disordered regions span residues 818–858 (PKAT…VNSS), 1028–1096 (VPIN…KTAS), 1259–1304 (NNNK…DLEK), 1648–1729 (DPSI…EEEK), and 1872–1913 (QKKR…GKKD). Over residues 823–839 (TPINDSNSPSSVSPKLI) the composition is skewed to polar residues. Low complexity-rich tracts occupy residues 840-858 (STSP…VNSS) and 1048-1066 (SSPN…QSPQ). Basic and acidic residues-rich tracts occupy residues 1263-1274 (SIEKSKSIDSKL) and 1288-1304 (RSDD…DLEK). Composition is skewed to low complexity over residues 1659 to 1685 (QQQQ…RSQS), 1695 to 1716 (SSIG…SLSS), and 1884 to 1898 (SSST…STNS). The span at 1899–1909 (FQTSTSGNSNS) shows a compositional bias: polar residues. One can recognise an SHR-BD domain in the interval 2405 to 2706 (TLSFYCQYWL…CYGWDEPSAE (302 aa)). The segment at 2909–2933 (RGNNASNNNNNNGMTSSQMRQSGSG) is disordered. Low complexity predominate over residues 2911–2920 (NNASNNNNNN).

This sequence belongs to the VPS13 family.

It localises to the membrane. In terms of biological role, mediates the transfer of lipids between membranes at organelle contact sites. The sequence is that of Intermembrane lipid transfer protein vps13A (vps13A) from Dictyostelium discoideum (Social amoeba).